A 136-amino-acid polypeptide reads, in one-letter code: Histone H3.2 (136 aa).

Positions 1–43 are disordered; it reads MARTKQTARKSTGGKAPRKQLATKAARKSAPATGGVKKPHRFR. At lysine 5 the chain carries N6-methylated lysine. Lysine 10 bears the N6-acetyllysine; alternate mark. An N6-methylated lysine; alternate modification is found at lysine 10. Phosphoserine is present on serine 11. Threonine 12 carries the phosphothreonine modification. Lysine 15 carries the N6-acetyllysine modification. N6-acetyllysine; alternate is present on residues lysine 19 and lysine 24. Residues lysine 19 and lysine 24 each carry the N6-methylated lysine; alternate modification. Lysine 28 carries the post-translational modification N6-methylated lysine. Serine 29 bears the Phosphoserine mark. An N6-methylated lysine modification is found at lysine 37.

This sequence belongs to the histone H3 family. The nucleosome is a histone octamer containing two molecules each of H2A, H2B, H3 and H4 assembled in one H3-H4 heterotetramer and two H2A-H2B heterodimers. The octamer wraps approximately 147 bp of DNA. Post-translationally, acetylation is generally linked to gene activation. Can be acetylated to form H3K9ac, H3K14ac, H3K18ac and H3K23ac. H3K9ac could compete with H3K9me and prevent gene silencing. H3K9ac is restricted to euchromatin. Methylated to form mainly H3K4me, H3K9me, H3K18me, H3K23me, H3K27me and H3K36me. H3K4me1/2/3, H3K9me3, H3K27me3 and H3K36me1/2/3 are typical marks for euchromatin, whereas heterochromatic chromocenters are enriched in H3K9me1/2 and H3K27me1/2. H2BK143ub1 is probably prerequisite for H3K4me. In terms of processing, can be phosphorylated to form H3S10ph, H3T11ph and H3S28ph.

It localises to the nucleus. The protein resides in the chromosome. Core component of nucleosome. Nucleosomes wrap and compact DNA into chromatin, limiting DNA accessibility to the cellular machineries which require DNA as a template. Histones thereby play a central role in transcription regulation, DNA repair, DNA replication and chromosomal stability. DNA accessibility is regulated via a complex set of post-translational modifications of histones, also called histone code, and nucleosome remodeling. In Encephalartos altensteinii (Altenstein's bread tree), this protein is Histone H3.2.